A 232-amino-acid chain; its full sequence is MKVAIIGAMEEEVALLRNQIQNLKTEIHGGFEYYLGQINAIDVILLRSGIGKVNAAIGTALLIKLYEPDYVINTGSAGGFHTDLEVGDIVISQSVCHHDVDVTPFGYARGQVPGHPECYLADIHLIDIAKRSIDALQEVTHMHGLIATGDRFMHLPEDVATTREYFPDMIACEMEAAAVAQTCHAFETPFVIIRSLSDIAGKENAVTFEQYLDKAATHSARLILEMLTHLKS.

The active-site Proton acceptor is Glu12. Substrate-binding positions include Gly78, Met153, and 174–175 (ME). Catalysis depends on Asp198, which acts as the Proton donor.

This sequence belongs to the PNP/UDP phosphorylase family. MtnN subfamily.

The catalysed reaction is S-adenosyl-L-homocysteine + H2O = S-(5-deoxy-D-ribos-5-yl)-L-homocysteine + adenine. The enzyme catalyses S-methyl-5'-thioadenosine + H2O = 5-(methylsulfanyl)-D-ribose + adenine. It carries out the reaction 5'-deoxyadenosine + H2O = 5-deoxy-D-ribose + adenine. It functions in the pathway amino-acid biosynthesis; L-methionine biosynthesis via salvage pathway; S-methyl-5-thio-alpha-D-ribose 1-phosphate from S-methyl-5'-thioadenosine (hydrolase route): step 1/2. Catalyzes the irreversible cleavage of the glycosidic bond in both 5'-methylthioadenosine (MTA) and S-adenosylhomocysteine (SAH/AdoHcy) to adenine and the corresponding thioribose, 5'-methylthioribose and S-ribosylhomocysteine, respectively. Also cleaves 5'-deoxyadenosine, a toxic by-product of radical S-adenosylmethionine (SAM) enzymes, into 5-deoxyribose and adenine. The sequence is that of 5'-methylthioadenosine/S-adenosylhomocysteine nucleosidase from Hydrogenovibrio crunogenus (strain DSM 25203 / XCL-2) (Thiomicrospira crunogena).